A 721-amino-acid chain; its full sequence is Phosphomethylpyrimidine synthase (721 aa).

Substrate is bound by residues N256, M285, Y314, H350, 370 to 372 (SRG), 411 to 414 (DGMR), and E450. H454 is a binding site for Zn(2+). Residue Y477 coordinates substrate. Position 518 (H518) interacts with Zn(2+). [4Fe-4S] cluster-binding residues include C598, C601, and C606.

It belongs to the ThiC family. As to quaternary structure, homodimer. It depends on [4Fe-4S] cluster as a cofactor.

It catalyses the reaction 5-amino-1-(5-phospho-beta-D-ribosyl)imidazole + S-adenosyl-L-methionine = 4-amino-2-methyl-5-(phosphooxymethyl)pyrimidine + CO + 5'-deoxyadenosine + formate + L-methionine + 3 H(+). The protein operates within cofactor biosynthesis; thiamine diphosphate biosynthesis. Its function is as follows. Catalyzes the synthesis of the hydroxymethylpyrimidine phosphate (HMP-P) moiety of thiamine from aminoimidazole ribotide (AIR) in a radical S-adenosyl-L-methionine (SAM)-dependent reaction. This is Phosphomethylpyrimidine synthase from Shewanella oneidensis (strain ATCC 700550 / JCM 31522 / CIP 106686 / LMG 19005 / NCIMB 14063 / MR-1).